A 950-amino-acid chain; its full sequence is Synaptotagmin-like protein 2 (950 aa).

One can recognise a RabBD domain in the interval 1-57 (MIDLSFLTEEEQDAILKVLQRDAALKRAEEERVRHLPEKIKDDQQLKNMSGQWFYEA). Disordered stretches follow at residues 78 to 98 (RKKL…AKES), 116 to 289 (VEEP…ETLR), and 361 to 620 (ESDQ…SSSG). The span at 87-97 (QNKDTAMRAKE) shows a compositional bias: basic and acidic residues. Polar residues-rich tracts occupy residues 140–150 (IDMSQESTRTP) and 173–183 (LQQTKPEQSKT). Over residues 193–205 (KEGELSESKEKSS) the composition is skewed to basic and acidic residues. Residues 219-230 (QTVSTEPENASH) show a composition bias toward polar residues. The segment covering 246-264 (NDLEKDDNQSFPRQRRDSL) has biased composition (basic and acidic residues). Over residues 434–445 (VESSSVINGQQE) the composition is skewed to polar residues. Composition is skewed to basic and acidic residues over residues 479-502 (HSFR…LERR) and 531-544 (ELVR…KADQ). The span at 557–567 (TVPSLPDNQFS) shows a compositional bias: polar residues. Residues 608–620 (SPSSLTNLSSSSG) show a composition bias toward low complexity. C2 domains follow at residues 644–769 (VKGS…LKWY) and 784–913 (NRGE…VDWM).

Monomer. Binds NRXN1. Binds RAB27A that has been activated by GTP-binding. Interacts with RAB27B. In terms of processing, isoform 1 is highly susceptible to proteolytic degradation and is stabilized by the interaction with RAB27A. In terms of tissue distribution, highly expressed in brain, lung, kidney, testis and in embryos after day 7. Detected at lower levels in skeletal muscle. Expressed in pancreatic alpha cells. Isoform 6 is highly expressed in brain, but not detectable in the other tissues tested. Isoform 1 is expressed abundantly in the stomach and is predominantly localized at the apical region of gastric-surface mucus cells. Isoform 11 is expressed in cytotoxic T-lymphocytes (CTL).

The protein resides in the melanosome membrane. It localises to the cell membrane. Isoform 11 acts as a RAB27A effector protein and plays a role in cytotoxic granule exocytosis in lymphocytes. Required for cytotoxic granule docking at the immunologic synapse. Isoform 1 may play a role in melanosome transport and vesicle trafficking. It controls melanosome distribution in the cell periphery and regulates melanocyte morphology. Isoform 1 acts as a positive mediator of mucus secretion by the surface mucus cells of the stomach. Mediates basal mucus secretion by gastric surface cells by promoting the proper granule biognesis and docking of mucus granules with the apical plasma membrane. The sequence is that of Synaptotagmin-like protein 2 (Sytl2) from Mus musculus (Mouse).